A 108-amino-acid polypeptide reads, in one-letter code: ATP synthase epsilon chain (108 aa).

It belongs to the ATPase epsilon chain family. As to quaternary structure, F-type ATPases have 2 components, CF(1) - the catalytic core - and CF(0) - the membrane proton channel. CF(1) has five subunits: alpha(3), beta(3), gamma(1), delta(1), epsilon(1). CF(0) has three main subunits: a, b and c.

It localises to the cell inner membrane. Functionally, produces ATP from ADP in the presence of a proton gradient across the membrane. This Thermotoga maritima (strain ATCC 43589 / DSM 3109 / JCM 10099 / NBRC 100826 / MSB8) protein is ATP synthase epsilon chain.